The chain runs to 418 residues: Torsin-4A-B (418 aa).

A helical membrane pass occupies residues 128 to 144 (CLLLFVGIVCFQIFNAI). 200 to 207 (GPSGVGKS) serves as a coordination point for ATP.

Belongs to the ClpA/ClpB family. Torsin subfamily.

Its subcellular location is the membrane. The sequence is that of Torsin-4A-B (tor4a-b) from Xenopus laevis (African clawed frog).